Consider the following 367-residue polypeptide: Phosphoribosylaminoimidazole-succinocarboxamide synthase (367 aa).

It belongs to the SAICAR synthetase family.

It catalyses the reaction 5-amino-1-(5-phospho-D-ribosyl)imidazole-4-carboxylate + L-aspartate + ATP = (2S)-2-[5-amino-1-(5-phospho-beta-D-ribosyl)imidazole-4-carboxamido]succinate + ADP + phosphate + 2 H(+). The protein operates within purine metabolism; IMP biosynthesis via de novo pathway; 5-amino-1-(5-phospho-D-ribosyl)imidazole-4-carboxamide from 5-amino-1-(5-phospho-D-ribosyl)imidazole-4-carboxylate: step 1/2. This is Phosphoribosylaminoimidazole-succinocarboxamide synthase from Shewanella piezotolerans (strain WP3 / JCM 13877).